The sequence spans 449 residues: Heterogeneous nuclear ribonucleoprotein H2 (449 aa).

Met-1 carries the post-translational modification N-acetylmethionine. Met-2 carries the post-translational modification N-acetylmethionine; in Heterogeneous nuclear ribonucleoprotein H2, N-terminally processed. An RRM 1 domain is found at 11-90 (FVVKVRGLPW…RYVEVFKSNS (80 aa)). A Phosphoserine modification is found at Ser-23. A Glycyl lysine isopeptide (Lys-Gly) (interchain with G-Cter in SUMO2) cross-link involves residue Lys-35. Phosphoserine occurs at positions 54 and 63. Residue Lys-87 forms a Glycyl lysine isopeptide (Lys-Gly) (interchain with G-Cter in SUMO2) linkage. Ser-90 is subject to Phosphoserine. Lys-98 participates in a covalent cross-link: Glycyl lysine isopeptide (Lys-Gly) (interchain with G-Cter in SUMO2). One can recognise an RRM 2 domain in the interval 111-188 (GFVRLRGLPF…RYIEIFKSSR (78 aa)). Arg-233 is modified (dimethylated arginine; alternate). Arg-233 bears the Omega-N-methylarginine; alternate mark. Residues 234–249 (GAYGGGYGGYDDYGGY) form a 1-1 repeat. Residues 234–433 (GAYGGGYGGY…YGGQSSMSGY (200 aa)) are 2 X 16 AA Gly-rich approximate repeats. Residue Tyr-246 is modified to Phosphotyrosine. An RRM 3 domain is found at 289 to 364 (HCVHMRGLPY…RYVELFLNST (76 aa)). The residue at position 310 (Ser-310) is a Phosphoserine. Tandem repeats lie at residues 354 to 372 (HRYV…GGAY), 374 to 392 (HSYV…GGAY), and 418 to 433 (GGYG…MSGY). The 2 X 19 AA perfect repeats stretch occupies residues 354-392 (HRYVELFLNSTAGTSGGAYDHSYVELFLNSTAGASGGAY).

In terms of assembly, component of a ribonucleoprotein complex containing mRNAs and RNA-binding proteins including DDX5, HNRNPH2 and SRSF1 as well as splicing regulator ARVCF. Interacts with TXNL4/DIM1.

The protein resides in the nucleus. It localises to the nucleoplasm. Its function is as follows. This protein is a component of the heterogeneous nuclear ribonucleoprotein (hnRNP) complexes which provide the substrate for the processing events that pre-mRNAs undergo before becoming functional, translatable mRNAs in the cytoplasm. Binds poly(RG). The protein is Heterogeneous nuclear ribonucleoprotein H2 (HNRNPH2) of Bos taurus (Bovine).